The chain runs to 185 residues: Potassium-transporting ATPase KdpC subunit (185 aa).

A helical membrane pass occupies residues 14-34 (ALSLLTGVAYPLALTGIAAVI).

Belongs to the KdpC family. The system is composed of three essential subunits: KdpA, KdpB and KdpC.

The protein localises to the cell inner membrane. Part of the high-affinity ATP-driven potassium transport (or Kdp) system, which catalyzes the hydrolysis of ATP coupled with the electrogenic transport of potassium into the cytoplasm. This subunit acts as a catalytic chaperone that increases the ATP-binding affinity of the ATP-hydrolyzing subunit KdpB by the formation of a transient KdpB/KdpC/ATP ternary complex. In Cereibacter sphaeroides (strain ATCC 17023 / DSM 158 / JCM 6121 / CCUG 31486 / LMG 2827 / NBRC 12203 / NCIMB 8253 / ATH 2.4.1.) (Rhodobacter sphaeroides), this protein is Potassium-transporting ATPase KdpC subunit.